The following is a 478-amino-acid chain: Putative sulfate transporter YbaR (478 aa).

The next 12 membrane-spanning stretches (helical) occupy residues Ile-19–Ile-39, Val-42–Gly-62, Pro-65–Asp-85, Gly-87–Ile-107, Val-121–Phe-141, Gly-143–Pro-163, Ala-168–Val-188, Ile-220–Ala-240, Gly-259–Ile-279, Ser-295–Val-315, Ala-345–Asp-365, and Leu-366–Ser-386. The STAS domain maps to Lys-389–Ala-478.

This sequence belongs to the SLC26A/SulP transporter (TC 2.A.53) family.

The protein resides in the cell membrane. This is Putative sulfate transporter YbaR (ybaR) from Bacillus subtilis (strain 168).